Consider the following 635-residue polypeptide: 1-deoxy-D-xylulose-5-phosphate synthase (635 aa).

Residues His72 and 113–115 (GHA) contribute to the thiamine diphosphate site. Asp144 contributes to the Mg(2+) binding site. Thiamine diphosphate is bound by residues 145-146 (GA), Asn174, Tyr286, and Glu369. Asn174 contributes to the Mg(2+) binding site.

The protein belongs to the transketolase family. DXPS subfamily. In terms of assembly, homodimer. It depends on Mg(2+) as a cofactor. Thiamine diphosphate is required as a cofactor.

The catalysed reaction is D-glyceraldehyde 3-phosphate + pyruvate + H(+) = 1-deoxy-D-xylulose 5-phosphate + CO2. It functions in the pathway metabolic intermediate biosynthesis; 1-deoxy-D-xylulose 5-phosphate biosynthesis; 1-deoxy-D-xylulose 5-phosphate from D-glyceraldehyde 3-phosphate and pyruvate: step 1/1. In terms of biological role, catalyzes the acyloin condensation reaction between C atoms 2 and 3 of pyruvate and glyceraldehyde 3-phosphate to yield 1-deoxy-D-xylulose-5-phosphate (DXP). In Acaryochloris marina (strain MBIC 11017), this protein is 1-deoxy-D-xylulose-5-phosphate synthase.